Reading from the N-terminus, the 236-residue chain is F-box and leucine-rich protein 22 (236 aa).

Residues M1–L46 form the F-box domain. 6 LRR repeats span residues F15–P40, W43–W72, H98–G123, C124–N149, C150–F175, and C176–S201.

In terms of assembly, directly interacts with SKP1 and CUL1. As to expression, enriched in cardiac muscle (at protein level).

It is found in the cytoplasm. The protein localises to the myofibril. It localises to the sarcomere. The protein resides in the z line. It participates in protein modification; protein ubiquitination. Functionally, substrate-recognition component of the SCF (SKP1-CUL1-F-box protein)-type E3 ubiquitin ligase complex. Promotes ubiquitination of sarcomeric proteins alpha-actinin-2 (ACTN2) and filamin-C (FLNC). The chain is F-box and leucine-rich protein 22 (Fbxl22) from Mus musculus (Mouse).